Reading from the N-terminus, the 114-residue chain is Transcription initiation factor IIB (114 aa).

2 tandem repeats follow at residues 1-17 (VEQK…AQEL) and 28-109 (QYVP…EQIE).

This sequence belongs to the TFIIB family.

Its function is as follows. Stabilizes TBP binding to an archaeal box-A promoter. Also responsible for recruiting RNA polymerase II to the pre-initiation complex (DNA-TBP-TFIIB). In Haloarcula vallismortis (Halobacterium vallismortis), this protein is Transcription initiation factor IIB (tfb).